We begin with the raw amino-acid sequence, 131 residues long: MRNLLLVAAVALSTAGCGIIYKQPIYQGNLIKQTAVEQLQVGQSKQQVSALLGTPSIPDPFHAQRWDYTSTQRVDRLARTDVKNFTVFFENEQVVRWEGDYFPAQDEQLAKSAPKQFGRNLARDKKKQRGR.

Positions Met-1 to Gly-16 are cleaved as a signal peptide. Cys-17 carries the N-palmitoyl cysteine lipid modification. Residue Cys-17 is the site of S-diacylglycerol cysteine attachment. The interval Ser-112–Arg-131 is disordered.

Belongs to the BamE family. Part of the Bam complex.

It is found in the cell outer membrane. Part of the outer membrane protein assembly complex, which is involved in assembly and insertion of beta-barrel proteins into the outer membrane. The chain is Outer membrane protein assembly factor BamE from Xanthomonas campestris pv. campestris (strain ATCC 33913 / DSM 3586 / NCPPB 528 / LMG 568 / P 25).